The chain runs to 88 residues: Small ribosomal subunit protein bS20 (88 aa).

Belongs to the bacterial ribosomal protein bS20 family.

Its function is as follows. Binds directly to 16S ribosomal RNA. The polypeptide is Small ribosomal subunit protein bS20 (Syntrophomonas wolfei subsp. wolfei (strain DSM 2245B / Goettingen)).